The sequence spans 370 residues: MEILMTVSKFASICTMGANASALEKEIGPEQFPVNEHYFGLVNFGNTCYCNSVLQALYFCRPFREKVLAYKSQPRKKESLLTCLADLFHSIATQKKKVGVIPPKKFITRLRKENELFDNYMQQDAHEFLNYLLNTIADILQEERKQEKQNGRLPNGNIDNENNNSTPDPTWVHEIFQGTLTNETRCLTCETISSKDEDFLDLSVDVEQNTSITHCLRGFSNTETLCSEYKYYCEECRSKQEAHKRMKVKKLPMILALHLKRFKYMDQLHRYTKLSYRVVFPLELRLFNTSGDATNPDRMYDLVAVVVHCGSGPNRGHYIAIVKSHDFWLLFDDDIVEKIDAQAIEEFYGLTSDISKNSESGYILFYQSRD.

The short motif at 1-4 (MEIL) is the Required for plasma membrane localization of USP12/WDR20 element. The 331-residue stretch at 39-369 (FGLVNFGNTC…SGYILFYQSR (331 aa)) folds into the USP domain. Catalysis depends on Cys48, which acts as the Nucleophile. Residues 145-169 (KQEKQNGRLPNGNIDNENNNSTPDP) form a disordered region. The span at 157 to 168 (NIDNENNNSTPD) shows a compositional bias: polar residues. 4 residues coordinate Zn(2+): Cys186, Cys189, Cys233, and Cys236. His317 functions as the Proton acceptor in the catalytic mechanism.

This sequence belongs to the peptidase C19 family. USP12/USP46 subfamily. In terms of assembly, interacts with WDR48. Interacts with WDR20; this interaction promotes translocation of the USP12 complex to the plasma membrane. Component of the USP12-WDR20-WDR48 deubiquitinating complex. Component of the USP12-DMWD-WDR48 deubiquitinating complex. Interacts with PHLPP1. Interacts with RBPJ. Interacts with CBP; this interaction blocks the acetyltransferase activity of CREBBP. Interacts with ITCH; the interaction is more efficient when both USP12 and WDR48/UAF1 are involved and may mediate recruitment of the USP12 deubiquitinating complex to Notch. Interacts with OPTN and SQSTM1/p62; the interaction is independent of deubiquitinase activity and may be involved in regulation of autophagic flux. (Microbial infection) Interacts with Epstein-Barr virus protein EBNA3.

It is found in the nucleus. The protein resides in the cytoplasm. The protein localises to the cell membrane. It catalyses the reaction Thiol-dependent hydrolysis of ester, thioester, amide, peptide and isopeptide bonds formed by the C-terminal Gly of ubiquitin (a 76-residue protein attached to proteins as an intracellular targeting signal).. Its activity is regulated as follows. Activated by interaction with WDR20, WDR48 and DMWD through different allosteric mechanisms. Deubiquitinating enzyme that plays various roles in the regulation of the immune response and inflammation. During TCR engagement and activation, translocates into the cytoplasm and deubiquitinates its substrates LAT and TRAT1 and prevents their lysosome-dependent degradation to stabilize the TCR signaling complex at the plasma membrane. Plays an essential role in the selective LPS-induced macrophage response through the activation of NF-kappa-B pathway. In addition, promotes that antiviral immune response through targeting DNA sensor IFI16 to inhibit its proteasome-dependent degradation. Participates in the interferon signaling pathway and antiviral response independently of its deubiquitinase activity by maintaining nuclear phosphorylated STAT1 levels via inhibition of its CREBBP-mediated acetylation and subsequent dephosphorylation. Plays an intrinsic role in promoting the differentiation, activation and proliferation of CD4(+) T-cell by activating the NF-kappa-B signaling pathway through deubiquitinating and stabilizing B-cell lymphoma/leukemia 10/BCL10. In myeloid-derived suppressor cells promotes the activation of the NF-kappa-B via deubiquitination and stabilization of RELA. Regulates the 'Lys-63'-linked polyubiquitin chains of BAX and thereby modulates the mitochondrial apoptotic process. Negative regulator of NOTCH signaling that specifically deubiquitinates non-activated NOTCH receptors to target them for lysosomal degradation; deubiquitination of NOTCH stimulates its transport form late endosomes to lysosomes. Protects neurons against HTT/huntingtin-induced polyglutamine expansion-dependent neurodegeneration through regulation of autophagic flux. This function is independent of deubiquitinase activity or of other components of the USP12-WDR20-WDR48 deubiquitinating complex. In complex with WDR48, acts as a potential tumor suppressor by positively regulating PHLPP1 stability. Its function is as follows. (Microbial infection) Forms a complex with Epstein-Barr virus protein EBNA3 which is an active deubiquitinase activity that may select specific substrates to promote B-lymphocyte transformation. In Homo sapiens (Human), this protein is Ubiquitin carboxyl-terminal hydrolase 12 (USP12).